The chain runs to 460 residues: Elongation factor 1-alpha (460 aa).

G2 carries the n,N,N-trimethylglycine modification. At K3 the chain carries N6,N6-dimethyllysine; alternate. K3 is subject to N6-methyllysine; alternate. Positions 6 to 241 (KTHINVVVIG…DAIEPPKRPT (236 aa)) constitute a tr-type G domain. The G1 stretch occupies residues 15 to 22 (GHVDSGKS). 15–22 (GHVDSGKS) contacts GTP. K31 is subject to N6-methyllysine. The G2 stretch occupies residues 71 to 75 (GITID). At K80 the chain carries N6,N6,N6-trimethyllysine. Positions 92–95 (DAPG) are G3. GTP is bound by residues 92 to 96 (DAPGH) and 154 to 157 (NKMD). The G4 stretch occupies residues 154–157 (NKMD). Residues 193–195 (SGF) are G5. N6,N6-dimethyllysine; alternate is present on K317. K317 carries the N6-methyllysine; alternate modification. K391 is modified (N6-methyllysine).

The protein belongs to the TRAFAC class translation factor GTPase superfamily. Classic translation factor GTPase family. EF-Tu/EF-1A subfamily.

The protein localises to the cytoplasm. Functionally, this protein promotes the GTP-dependent binding of aminoacyl-tRNA to the A-site of ribosomes during protein biosynthesis. The polypeptide is Elongation factor 1-alpha (tef-1) (Neurospora crassa (strain ATCC 24698 / 74-OR23-1A / CBS 708.71 / DSM 1257 / FGSC 987)).